We begin with the raw amino-acid sequence, 371 residues long: uncharacterized protein (371 aa).

His76 is a Zn(2+) binding site. The active site involves Asp78. Zn(2+) is bound at residue Asp106. Glu139 (proton acceptor) is an active-site residue. Residues Glu140, Asp163, and His344 each contribute to the Zn(2+) site.

It belongs to the peptidase M20A family. It depends on Zn(2+) as a cofactor.

Could be a peptidase. This is an uncharacterized protein from Bacillus subtilis (strain 168).